A 229-amino-acid polypeptide reads, in one-letter code: Acetylcholine-binding protein (229 aa).

Residues 1 to 19 (MRRNIFCLACLWIVQACLS) form the signal peptide. An N-linked (GlcNAc...) asparagine glycan is attached at Asn-85. The Ig-like domain occupies 114–217 (PEVLTPQLAR…PEAYEDVEVS (104 aa)). Cys-142 and Cys-155 are disulfide-bonded.

As to quaternary structure, homopentamer. In terms of processing, N-glycosylated. Expressed by glial cells.

It is found in the synaptic cleft. In terms of biological role, binds to acetylcholine. Modulates neuronal synaptic transmission. In Lymnaea stagnalis (Great pond snail), this protein is Acetylcholine-binding protein.